The following is a 1261-amino-acid chain: Mediator of RNA polymerase II transcription subunit 14 (1261 aa).

Positions 1-11 (MPNGKQQHEVT) are enriched in basic and acidic residues. 3 disordered regions span residues 1–21 (MPNG…EIPH), 413–435 (NETA…GETE), and 1193–1220 (DNDI…ENET). A compositionally biased stretch (acidic residues) spans 417-427 (IVDDNDNDNDD). Over residues 1205 to 1220 (QNEKENSKTTSKENET) the composition is skewed to basic and acidic residues.

Belongs to the Mediator complex subunit 14 family. Component of the Mediator complex.

The protein localises to the nucleus. Its function is as follows. Component of the Mediator complex, a coactivator involved in the regulated transcription of nearly all RNA polymerase II-dependent genes. Mediator functions as a bridge to convey information from gene-specific regulatory proteins to the basal RNA polymerase II transcription machinery. Mediator is recruited to promoters by direct interactions with regulatory proteins and serves as a scaffold for the assembly of a functional preinitiation complex with RNA polymerase II and the general transcription factors. The sequence is that of Mediator of RNA polymerase II transcription subunit 14 (MED14) from Candida albicans (strain SC5314 / ATCC MYA-2876) (Yeast).